Here is a 395-residue protein sequence, read N- to C-terminus: Homoserine O-acetyltransferase (395 aa).

The 299-residue stretch at 65 to 363 (PIVLIEHALT…SPTGHDGFLI (299 aa)) folds into the AB hydrolase-1 domain. Catalysis depends on Ser160, which acts as the Nucleophile. Residue Arg230 coordinates substrate. Active-site residues include Asp328 and His358. Asp359 serves as a coordination point for substrate.

This sequence belongs to the AB hydrolase superfamily. MetX family. As to quaternary structure, homodimer.

It localises to the cytoplasm. It catalyses the reaction L-homoserine + acetyl-CoA = O-acetyl-L-homoserine + CoA. Its pathway is amino-acid biosynthesis; L-methionine biosynthesis via de novo pathway; O-acetyl-L-homoserine from L-homoserine: step 1/1. Its function is as follows. Transfers an acetyl group from acetyl-CoA to L-homoserine, forming acetyl-L-homoserine. The protein is Homoserine O-acetyltransferase of Corynebacterium jeikeium (strain K411).